Reading from the N-terminus, the 312-residue chain is Ribosomal RNA small subunit methyltransferase H (312 aa).

S-adenosyl-L-methionine-binding positions include 35–37, D55, F79, D101, and Q108; that span reads GGH.

It belongs to the methyltransferase superfamily. RsmH family.

The protein localises to the cytoplasm. The enzyme catalyses cytidine(1402) in 16S rRNA + S-adenosyl-L-methionine = N(4)-methylcytidine(1402) in 16S rRNA + S-adenosyl-L-homocysteine + H(+). Its function is as follows. Specifically methylates the N4 position of cytidine in position 1402 (C1402) of 16S rRNA. The sequence is that of Ribosomal RNA small subunit methyltransferase H from Buchnera aphidicola subsp. Schizaphis graminum (strain Sg).